The sequence spans 123 residues: Small ribosomal subunit protein uS12 (123 aa).

3-methylthioaspartic acid is present on Asp89.

This sequence belongs to the universal ribosomal protein uS12 family. Part of the 30S ribosomal subunit. Contacts proteins S8 and S17. May interact with IF1 in the 30S initiation complex.

Functionally, with S4 and S5 plays an important role in translational accuracy. Its function is as follows. Interacts with and stabilizes bases of the 16S rRNA that are involved in tRNA selection in the A site and with the mRNA backbone. Located at the interface of the 30S and 50S subunits, it traverses the body of the 30S subunit contacting proteins on the other side and probably holding the rRNA structure together. The combined cluster of proteins S8, S12 and S17 appears to hold together the shoulder and platform of the 30S subunit. This chain is Small ribosomal subunit protein uS12, found in Rhodopseudomonas palustris (strain BisB18).